Reading from the N-terminus, the 648-residue chain is DNA polymerase (648 aa).

The protein belongs to the DNA polymerase type-A family.

The catalysed reaction is DNA(n) + a 2'-deoxyribonucleoside 5'-triphosphate = DNA(n+1) + diphosphate. In terms of biological role, replicates the viral genomic DNA. This polymerase possesses two enzymatic activities: DNA synthesis (polymerase) and an exonucleolytic activity that degrades single-stranded DNA in the 3'-5' direction. The polypeptide is DNA polymerase (L) (Bacillus subtilis (Bacteriophage SP02)).